A 354-amino-acid chain; its full sequence is tRNA N6-adenosine threonylcarbamoyltransferase (354 aa).

2 residues coordinate Fe cation: histidine 116 and histidine 120. Residues 139–143, aspartate 172, glycine 185, and asparagine 281 each bind substrate; that span reads LVSGG. Residue aspartate 309 participates in Fe cation binding.

It belongs to the KAE1 / TsaD family. Fe(2+) is required as a cofactor.

The protein localises to the cytoplasm. The enzyme catalyses L-threonylcarbamoyladenylate + adenosine(37) in tRNA = N(6)-L-threonylcarbamoyladenosine(37) in tRNA + AMP + H(+). In terms of biological role, required for the formation of a threonylcarbamoyl group on adenosine at position 37 (t(6)A37) in tRNAs that read codons beginning with adenine. Is involved in the transfer of the threonylcarbamoyl moiety of threonylcarbamoyl-AMP (TC-AMP) to the N6 group of A37, together with TsaE and TsaB. TsaD likely plays a direct catalytic role in this reaction. The sequence is that of tRNA N6-adenosine threonylcarbamoyltransferase from Parasynechococcus marenigrum (strain WH8102).